We begin with the raw amino-acid sequence, 121 residues long: MIQMQTNLDVADNSGARRVQCIKVLGGSHRRYAHIGDIIKVTVKEAIPRGKVKKGDVLTAVVVRTRKGVRRSDGSSIRFDNNAAVLLNANKQPIGTRIFGPVTRELRVNNMKIVSLAPEVL.

This sequence belongs to the universal ribosomal protein uL14 family. As to quaternary structure, part of the 50S ribosomal subunit. Forms a cluster with proteins L3 and L19. In the 70S ribosome, L14 and L19 interact and together make contacts with the 16S rRNA in bridges B5 and B8.

Its function is as follows. Binds to 23S rRNA. Forms part of two intersubunit bridges in the 70S ribosome. The chain is Large ribosomal subunit protein uL14 from Pseudoalteromonas atlantica (strain T6c / ATCC BAA-1087).